The primary structure comprises 379 residues: Cytochrome b (379 aa).

The next 4 membrane-spanning stretches (helical) occupy residues 34–54, 78–99, 114–134, and 179–199; these read FGSLLGACLILQTITGIFLAM, WLIRNMHANGASLFFMCIYLHI, WNTGITLLLLTMATAFVGYVL, and FFTFHFLLPFTIMGMTMVHLL. 2 residues coordinate heme b: H84 and H98. Heme b-binding residues include H183 and H197. H202 lines the a ubiquinone pocket. 4 consecutive transmembrane segments (helical) span residues 227-247, 289-309, 321-341, and 348-368; these read YKDLLGLILMLAFLLTLTLFY, LGGVLALLLSILVLFLMPTLH, LTQTLFWSFIANLMVLTWIGG, and FITIGQVASILHFLILLILMP.

The protein belongs to the cytochrome b family. The cytochrome bc1 complex contains 3 respiratory subunits (MT-CYB, CYC1 and UQCRFS1), 2 core proteins (UQCRC1 and UQCRC2) and probably 6 low-molecular weight proteins. It depends on heme b as a cofactor.

Its subcellular location is the mitochondrion inner membrane. In terms of biological role, component of the ubiquinol-cytochrome c reductase complex (complex III or cytochrome b-c1 complex) that is part of the mitochondrial respiratory chain. The b-c1 complex mediates electron transfer from ubiquinol to cytochrome c. Contributes to the generation of a proton gradient across the mitochondrial membrane that is then used for ATP synthesis. The protein is Cytochrome b (MT-CYB) of Glyptemys muhlenbergii (Bog turtle).